Consider the following 359-residue polypeptide: Peptide chain release factor 1 (359 aa).

Gln235 carries the post-translational modification N5-methylglutamine.

This sequence belongs to the prokaryotic/mitochondrial release factor family. In terms of processing, methylated by PrmC. Methylation increases the termination efficiency of RF1.

It is found in the cytoplasm. In terms of biological role, peptide chain release factor 1 directs the termination of translation in response to the peptide chain termination codons UAG and UAA. This is Peptide chain release factor 1 from Nitrosomonas eutropha (strain DSM 101675 / C91 / Nm57).